We begin with the raw amino-acid sequence, 374 residues long: O-methyltransferase acrG (374 aa).

Y19, N70, D96, S128, and F129 together coordinate S-adenosyl-L-homocysteine. A Mg(2+)-binding site is contributed by F245.

It belongs to the methyltransferase superfamily. Type-7 methyltransferase family.

It functions in the pathway secondary metabolite biosynthesis. In terms of biological role, O-methyltransferase; part of the cluster that mediates the biosynthesis of acurin A, a highly reduced polyketide coupled to a serine via a peptide bond. The activities of the highly reducing polyketide synthase acrA and the nonribosomal peptide synthetase acrB are collectively responsible for the synthesis of the acurin A core structure with a heptaketide backbone produced by acrA covalently fused to a L-serine by acrB. After the formation of the PK-NRP hybrid product, it is detached from acrB by reductive release to set up the formation of the lactam ring by aldol condensation. The hydrolyase acrC then catalyzes water loss to generate a double bond in the ring. This double bond is probably reduced, which is followed by three oxidations at C-22 to generate the carboxylic acid moiety, involving probably the FAD-binding monooxygenase acrE and the cytochrome P450 monooxygenases acrD and acrF. Finally, a last methylation step performed by the O-methyltransferase acrG leads to the production of acurin A. The sequence is that of O-methyltransferase acrG from Aspergillus aculeatus (strain ATCC 16872 / CBS 172.66 / WB 5094).